The chain runs to 152 residues: Endoribonuclease YbeY (152 aa).

Zn(2+)-binding residues include histidine 113, histidine 117, and histidine 123.

Belongs to the endoribonuclease YbeY family. The cofactor is Zn(2+).

It is found in the cytoplasm. Single strand-specific metallo-endoribonuclease involved in late-stage 70S ribosome quality control and in maturation of the 3' terminus of the 16S rRNA. The protein is Endoribonuclease YbeY of Wolbachia pipientis subsp. Culex pipiens (strain wPip).